The primary structure comprises 811 residues: Glycerol-3-phosphate acyltransferase (811 aa).

Residues 309–314 (HRSHMD) carry the HXXXXD motif motif.

This sequence belongs to the GPAT/DAPAT family.

It localises to the cell inner membrane. The enzyme catalyses sn-glycerol 3-phosphate + an acyl-CoA = a 1-acyl-sn-glycero-3-phosphate + CoA. Its pathway is phospholipid metabolism; CDP-diacylglycerol biosynthesis; CDP-diacylglycerol from sn-glycerol 3-phosphate: step 1/3. The chain is Glycerol-3-phosphate acyltransferase (plsB) from Vibrio cholerae serotype O1 (strain ATCC 39315 / El Tor Inaba N16961).